The primary structure comprises 135 residues: Small ribosomal subunit protein uS12 (135 aa).

Position 89 is a 3-methylthioaspartic acid (Asp-89). Residues 101 to 135 (SLDTSGVADRKQSRSKYGAKQPKAGAAAPAKGKGR) form a disordered region. Low complexity predominate over residues 118 to 135 (GAKQPKAGAAAPAKGKGR).

The protein belongs to the universal ribosomal protein uS12 family. Part of the 30S ribosomal subunit. Contacts proteins S8 and S17. May interact with IF1 in the 30S initiation complex.

Its function is as follows. With S4 and S5 plays an important role in translational accuracy. In terms of biological role, interacts with and stabilizes bases of the 16S rRNA that are involved in tRNA selection in the A site and with the mRNA backbone. Located at the interface of the 30S and 50S subunits, it traverses the body of the 30S subunit contacting proteins on the other side and probably holding the rRNA structure together. The combined cluster of proteins S8, S12 and S17 appears to hold together the shoulder and platform of the 30S subunit. The sequence is that of Small ribosomal subunit protein uS12 from Chlorobium limicola (strain DSM 245 / NBRC 103803 / 6330).